The sequence spans 266 residues: Eukaryotic translation initiation factor 3 subunit J (266 aa).

Disordered stretches follow at residues 1–111 (MAPS…EKDA) and 217–266 (NEKM…DDFM). Acidic residues predominate over residues 26–44 (DEEEEDVLDSWDAAEDSEV). The stretch at 40–82 (EDSEVEREKAAKAAEAKAKAEAEAAANKKSKAQRIQEKKAQRK) forms a coiled coil. 2 stretches are compositionally biased toward basic and acidic residues: residues 45–61 (EREK…KAEA) and 73–85 (RIQE…KADA). Residues 86 to 97 (DAEDSDDSDEDE) are compositionally biased toward acidic residues. 2 stretches are compositionally biased toward basic and acidic residues: residues 98-111 (AERR…EKDA) and 218-230 (EKMK…DKGN). Residues 254–266 (SYDDDGLDDDDFM) show a composition bias toward acidic residues.

Belongs to the eIF-3 subunit J family. In terms of assembly, component of the eukaryotic translation initiation factor 3 (eIF-3) complex.

The protein resides in the cytoplasm. Component of the eukaryotic translation initiation factor 3 (eIF-3) complex, which is involved in protein synthesis of a specialized repertoire of mRNAs and, together with other initiation factors, stimulates binding of mRNA and methionyl-tRNAi to the 40S ribosome. The eIF-3 complex specifically targets and initiates translation of a subset of mRNAs involved in cell proliferation. This Aspergillus niger (strain ATCC MYA-4892 / CBS 513.88 / FGSC A1513) protein is Eukaryotic translation initiation factor 3 subunit J (hcr1).